The following is a 362-amino-acid chain: Holliday junction branch migration complex subunit RuvB (362 aa).

The interval 1-27 (MANIEKTEFHVPAPVSAAGNQKSSLGN) is disordered. The large ATPase domain (RuvB-L) stretch occupies residues 13 to 206 (APVSAAGNQK…FGFTAQMEFY (194 aa)). ATP contacts are provided by residues L45, R46, G87, K90, T91, T92, 153 to 155 (EDF), R196, Y206, and R243. Mg(2+) is bound at residue T91. Positions 207–277 (EVEDLTKVVV…AAQAALVVFD (71 aa)) are small ATPAse domain (RuvB-S). The head domain (RuvB-H) stretch occupies residues 280-362 (EMGLDRLDRA…EPPEGIIGSL (83 aa)). Residues R335 and R340 each contribute to the DNA site.

This sequence belongs to the RuvB family. As to quaternary structure, homohexamer. Forms an RuvA(8)-RuvB(12)-Holliday junction (HJ) complex. HJ DNA is sandwiched between 2 RuvA tetramers; dsDNA enters through RuvA and exits via RuvB. An RuvB hexamer assembles on each DNA strand where it exits the tetramer. Each RuvB hexamer is contacted by two RuvA subunits (via domain III) on 2 adjacent RuvB subunits; this complex drives branch migration. In the full resolvosome a probable DNA-RuvA(4)-RuvB(12)-RuvC(2) complex forms which resolves the HJ.

The protein resides in the cytoplasm. The enzyme catalyses ATP + H2O = ADP + phosphate + H(+). The RuvA-RuvB-RuvC complex processes Holliday junction (HJ) DNA during genetic recombination and DNA repair, while the RuvA-RuvB complex plays an important role in the rescue of blocked DNA replication forks via replication fork reversal (RFR). RuvA specifically binds to HJ cruciform DNA, conferring on it an open structure. The RuvB hexamer acts as an ATP-dependent pump, pulling dsDNA into and through the RuvAB complex. RuvB forms 2 homohexamers on either side of HJ DNA bound by 1 or 2 RuvA tetramers; 4 subunits per hexamer contact DNA at a time. Coordinated motions by a converter formed by DNA-disengaged RuvB subunits stimulates ATP hydrolysis and nucleotide exchange. Immobilization of the converter enables RuvB to convert the ATP-contained energy into a lever motion, pulling 2 nucleotides of DNA out of the RuvA tetramer per ATP hydrolyzed, thus driving DNA branch migration. The RuvB motors rotate together with the DNA substrate, which together with the progressing nucleotide cycle form the mechanistic basis for DNA recombination by continuous HJ branch migration. Branch migration allows RuvC to scan DNA until it finds its consensus sequence, where it cleaves and resolves cruciform DNA. The chain is Holliday junction branch migration complex subunit RuvB from Corynebacterium diphtheriae (strain ATCC 700971 / NCTC 13129 / Biotype gravis).